The sequence spans 710 residues: WD repeat-containing protein CG11141 (710 aa).

2 WD repeats span residues phenylalanine 31–leucine 70 and leucine 133–lysine 172. Residues leucine 283–serine 307 form a disordered region. The segment covering serine 292–serine 307 has biased composition (low complexity). Residue threonine 488 is modified to Phosphothreonine. Residue serine 553 is modified to Phosphoserine. Disordered stretches follow at residues alanine 612–valine 635 and aspartate 685–asparagine 710. Composition is skewed to polar residues over residues serine 613–asparagine 624 and proline 694–glutamate 704.

Belongs to the WD repeat KIAA0329 family.

The protein is WD repeat-containing protein CG11141 of Drosophila melanogaster (Fruit fly).